The following is a 947-amino-acid chain: Leucine-rich repeat-containing protein 37B (947 aa).

The signal sequence occupies residues 1-27 (MSWLRFWGPWPLLTWQLLSLLVKEAQP). Over 28–905 (LVWVKDPLQL…EVPGDDYKNK (878 aa)) the chain is Extracellular. Disordered regions lie at residues 42–88 (LGPP…ALPQ), 226–257 (YLSM…QVGL), 294–458 (EVEP…PEPT), and 484–514 (SLTE…EQKA). Polar residues predominate over residues 311 to 320 (SMESLAQTPL). Asparagine 358 is a glycosylation site (N-linked (GlcNAc...) asparagine). 3 stretches are compositionally biased toward polar residues: residues 404–415 (GQAQHSHLTEAT), 436–445 (SPTTEETSAQ), and 495–507 (LESS…QSET). LRR repeat units lie at residues 556–577 (IFTT…VWKA), 580–601 (WTEK…SFEG), 604–625 (YLQY…TFES), 628–649 (FLQY…TFQA), 655–676 (FLHN…YLFE), and 679–699 (ALKY…KNIL). A glycan (N-linked (GlcNAc...) asparagine) is linked at asparagine 789. Residues 867 to 897 (DTDQQKTNYINENMEQNEQKEQKSSELMKEV) are a coiled coil. The chain crosses the membrane as a helical span at residues 906–926 (LIFAISVTVILIILIIIFCLI). Over 927–947 (EVNSHKRASEKYKDNPSISGA) the chain is Cytoplasmic.

It is found in the membrane. This is Leucine-rich repeat-containing protein 37B (LRRC37B) from Homo sapiens (Human).